The chain runs to 428 residues: GTPase Obg (428 aa).

The Obg domain occupies 1–158 (MFIDQVKIYV…RDVILELKVL (158 aa)). The OBG-type G domain occupies 159 to 329 (ADVGLVGFPS…LLFEVANLIE (171 aa)). GTP is bound by residues 165–172 (GFPSVGKS), 190–194 (FTTIV), 212–215 (DLPG), 282–285 (NKMD), and 310–312 (SAV). Mg(2+)-binding residues include Ser-172 and Thr-192. The OCT domain occupies 350–428 (KFETEGVKFD…ILEYEFEFID (79 aa)).

This sequence belongs to the TRAFAC class OBG-HflX-like GTPase superfamily. OBG GTPase family. As to quaternary structure, monomer. Mg(2+) is required as a cofactor.

It is found in the cytoplasm. An essential GTPase which binds GTP, GDP and possibly (p)ppGpp with moderate affinity, with high nucleotide exchange rates and a fairly low GTP hydrolysis rate. Plays a role in control of the cell cycle, stress response, ribosome biogenesis and in those bacteria that undergo differentiation, in morphogenesis control. The polypeptide is GTPase Obg (Bacillus anthracis).